We begin with the raw amino-acid sequence, 640 residues long: Tyrosine--tRNA ligase, mitochondrial (640 aa).

Residue tyrosine 100 coordinates L-tyrosine. Position 104 (aspartate 104) interacts with ATP. Residues proline 105–histidine 114 carry the 'HIGH' region motif. The L-tyrosine site is built by aspartate 144, tyrosine 248, glutamine 252, aspartate 255, and glutamine 274. Positions lysine 322–serine 326 match the 'KMSKS' region motif. Lysine 325 contacts ATP.

It belongs to the class-I aminoacyl-tRNA synthetase family.

The protein localises to the mitochondrion matrix. The catalysed reaction is tRNA(Tyr) + L-tyrosine + ATP = L-tyrosyl-tRNA(Tyr) + AMP + diphosphate + H(+). Functionally, has both an aminoacyl-tRNA synthetase activity and is involved in the splicing of group I introns. The sequence is that of Tyrosine--tRNA ligase, mitochondrial (YTS1) from Podospora anserina (Pleurage anserina).